A 146-amino-acid chain; its full sequence is MGRFIFISFGLLVVFLSLSGTEADCLPDWFHYEGHCYRVFDEPKTWADAEKFCSEQANGGHLVSVHSRKEAGLVGVLAYQTLESPIVWMGLSKVWNQCDWGWTNGAKLKYEARAEESYCIHITSKKKEWKSLPCRNYGHFVCKSPA.

The N-terminal stretch at 1 to 23 (MGRFIFISFGLLVVFLSLSGTEA) is a signal peptide. Cystine bridges form between Cys25-Cys36, Cys53-Cys142, and Cys119-Cys134. The 112-residue stretch at 32–143 (YEGHCYRVFD…CRNYGHFVCK (112 aa)) folds into the C-type lectin domain.

Belongs to the snaclec family. As to quaternary structure, heterodimer; disulfide-linked. Expressed by the venom gland.

Its subcellular location is the secreted. Its function is as follows. Interferes with one step of hemostasis (modulation of platelet aggregation, or coagulation cascade, for example). This Bitis arietans (African puff adder) protein is Snaclec 1.